The sequence spans 619 residues: Isocitrate dehydrogenase kinase/phosphatase (619 aa).

ATP is bound by residues 354–360 and lysine 375; that span reads APGIRGM. Residue aspartate 409 is part of the active site.

The protein belongs to the AceK family.

It localises to the cytoplasm. It carries out the reaction L-seryl-[isocitrate dehydrogenase] + ATP = O-phospho-L-seryl-[isocitrate dehydrogenase] + ADP + H(+). Bifunctional enzyme which can phosphorylate or dephosphorylate isocitrate dehydrogenase (IDH) on a specific serine residue. This is a regulatory mechanism which enables bacteria to bypass the Krebs cycle via the glyoxylate shunt in response to the source of carbon. When bacteria are grown on glucose, IDH is fully active and unphosphorylated, but when grown on acetate or ethanol, the activity of IDH declines drastically concomitant with its phosphorylation. The protein is Isocitrate dehydrogenase kinase/phosphatase of Bordetella bronchiseptica (strain ATCC BAA-588 / NCTC 13252 / RB50) (Alcaligenes bronchisepticus).